Consider the following 342-residue polypeptide: Isopentenyl-diphosphate delta-isomerase (342 aa).

Substrate is bound at residue 11–12; the sequence is RK. Residues Ser-68, 69–71, Ser-99, and Asn-128 each bind FMN; that span reads SMT. 99–101 provides a ligand contact to substrate; sequence SQR. Gln-162 contacts substrate. Residue Glu-163 coordinates Mg(2+). FMN is bound by residues Lys-194, Ser-219, Thr-224, 275 to 277, and 296 to 297; these read GVR and AK.

Belongs to the IPP isomerase type 2 family. As to quaternary structure, homooctamer. Dimer of tetramers. Requires FMN as cofactor. The cofactor is NADPH. Mg(2+) serves as cofactor.

It is found in the cytoplasm. It carries out the reaction isopentenyl diphosphate = dimethylallyl diphosphate. Functionally, involved in the biosynthesis of isoprenoids. Catalyzes the 1,3-allylic rearrangement of the homoallylic substrate isopentenyl (IPP) to its allylic isomer, dimethylallyl diphosphate (DMAPP). In Legionella pneumophila (strain Corby), this protein is Isopentenyl-diphosphate delta-isomerase.